A 358-amino-acid polypeptide reads, in one-letter code: GTPase Obg (358 aa).

The region spanning methionine 1 to leucine 159 is the Obg domain. One can recognise an OBG-type G domain in the interval alanine 160–glutamate 334. GTP-binding positions include glycine 166–serine 173, phenylalanine 191–tyrosine 195, aspartate 213–glycine 216, asparagine 284–aspartate 287, and serine 315–leucine 317. Mg(2+)-binding residues include serine 173 and threonine 193. A disordered region spans residues aspartate 337 to glutamate 358. A compositionally biased stretch (basic and acidic residues) spans arginine 341–glutamate 358.

It belongs to the TRAFAC class OBG-HflX-like GTPase superfamily. OBG GTPase family. In terms of assembly, monomer. Mg(2+) is required as a cofactor.

The protein resides in the cytoplasm. An essential GTPase which binds GTP, GDP and possibly (p)ppGpp with moderate affinity, with high nucleotide exchange rates and a fairly low GTP hydrolysis rate. Plays a role in control of the cell cycle, stress response, ribosome biogenesis and in those bacteria that undergo differentiation, in morphogenesis control. The protein is GTPase Obg of Alkalilimnicola ehrlichii (strain ATCC BAA-1101 / DSM 17681 / MLHE-1).